Here is a 403-residue protein sequence, read N- to C-terminus: GTPase Obg (403 aa).

An Obg domain is found at 1–159 (MKFIDESLIR…RDLLLELMLL (159 aa)). Positions 160-333 (ADVGMLGFPN…LCRDIMDFII (174 aa)) constitute an OBG-type G domain. GTP contacts are provided by residues 166–173 (GFPNAGKS), 191–195 (FTTLV), 213–216 (DIPG), 283–286 (NKID), and 314–316 (SAA). 2 residues coordinate Mg(2+): Ser-173 and Thr-193. A disordered region spans residues 364–403 (YQFDDDEDWDDDWTEEDDDEDWDDDWSEEDDEGIEFIYKP). Acidic residues predominate over residues 365 to 397 (QFDDDEDWDDDWTEEDDDEDWDDDWSEEDDEGI).

It belongs to the TRAFAC class OBG-HflX-like GTPase superfamily. OBG GTPase family. Monomer. The cofactor is Mg(2+).

It is found in the cytoplasm. Its function is as follows. An essential GTPase which binds GTP, GDP and possibly (p)ppGpp with moderate affinity, with high nucleotide exchange rates and a fairly low GTP hydrolysis rate. Plays a role in control of the cell cycle, stress response, ribosome biogenesis and in those bacteria that undergo differentiation, in morphogenesis control. This chain is GTPase Obg, found in Haemophilus influenzae (strain PittGG).